The primary structure comprises 659 residues: Chaperone protein DnaK (659 aa).

Thr-201 carries the post-translational modification Phosphothreonine; by autocatalysis. Basic and acidic residues predominate over residues Arg-571 to Arg-592. The interval Arg-571–Asp-659 is disordered. The span at Ala-600 to Gln-613 shows a compositional bias: low complexity.

It belongs to the heat shock protein 70 family.

Its function is as follows. Acts as a chaperone. This is Chaperone protein DnaK from Chlamydia abortus (strain DSM 27085 / S26/3) (Chlamydophila abortus).